The primary structure comprises 241 residues: Probable xyloglucan-specific endo-beta-1,4-glucanase A (241 aa).

A signal peptide spans 1-15; that stretch reads MKVLALSALLSLASA. A glycan (N-linked (GlcNAc...) asparagine) is linked at N47.

It belongs to the glycosyl hydrolase 12 (cellulase H) family.

Its subcellular location is the secreted. It catalyses the reaction xyloglucan + H2O = xyloglucan oligosaccharides.. Functionally, catalyzes endohydrolysis of 1,4-beta-D-glucosidic linkages in xyloglucan with retention of the beta-configuration of the glycosyl residues. Specific for xyloglucan and does not hydrolyze other cell wall components. This is Probable xyloglucan-specific endo-beta-1,4-glucanase A (xgeA) from Aspergillus niger (strain ATCC MYA-4892 / CBS 513.88 / FGSC A1513).